A 222-amino-acid chain; its full sequence is Orotate phosphoribosyltransferase (222 aa).

K29 contacts 5-phospho-alpha-D-ribose 1-diphosphate. 37 to 38 serves as a coordination point for orotate; it reads FF. Residues 75 to 76, R101, K102, K105, H107, and 126 to 134 contribute to the 5-phospho-alpha-D-ribose 1-diphosphate site; these read YK and DDVISAGTS. S130 and R158 together coordinate orotate.

This sequence belongs to the purine/pyrimidine phosphoribosyltransferase family. PyrE subfamily. In terms of assembly, homodimer. It depends on Mg(2+) as a cofactor.

It catalyses the reaction orotidine 5'-phosphate + diphosphate = orotate + 5-phospho-alpha-D-ribose 1-diphosphate. Its pathway is pyrimidine metabolism; UMP biosynthesis via de novo pathway; UMP from orotate: step 1/2. Its function is as follows. Catalyzes the transfer of a ribosyl phosphate group from 5-phosphoribose 1-diphosphate to orotate, leading to the formation of orotidine monophosphate (OMP). This is Orotate phosphoribosyltransferase from Polynucleobacter asymbioticus (strain DSM 18221 / CIP 109841 / QLW-P1DMWA-1) (Polynucleobacter necessarius subsp. asymbioticus).